Consider the following 180-residue polypeptide: ATP-dependent protease subunit HslV (180 aa).

Threonine 5 is a catalytic residue. The Na(+) site is built by glycine 165, cysteine 168, and threonine 171.

This sequence belongs to the peptidase T1B family. HslV subfamily. A double ring-shaped homohexamer of HslV is capped on each side by a ring-shaped HslU homohexamer. The assembly of the HslU/HslV complex is dependent on binding of ATP.

The protein localises to the cytoplasm. It catalyses the reaction ATP-dependent cleavage of peptide bonds with broad specificity.. Its activity is regulated as follows. Allosterically activated by HslU binding. Functionally, protease subunit of a proteasome-like degradation complex believed to be a general protein degrading machinery. The protein is ATP-dependent protease subunit HslV of Helicobacter pylori (strain ATCC 700392 / 26695) (Campylobacter pylori).